The sequence spans 698 residues: Sialic acid-binding Ig-like lectin 11 (698 aa).

An N-terminal signal peptide occupies residues 1–27 (MVPGQAQPQSPEMLLLPLLLPVLGAGS). The Extracellular segment spans residues 28–561 (LNKDPSYSLQ…KLEHGGGLGL (534 aa)). One can recognise an Ig-like V-type domain in the interval 31–134 (DPSYSLQVQR…DEAWYFFRVE (104 aa)). 3 disulfide bridges follow: cysteine 49/cysteine 186, cysteine 54/cysteine 114, and cysteine 177/cysteine 228. Residues asparagine 55 and asparagine 90 are each glycosylated (N-linked (GlcNAc...) asparagine). Arginine 132 is a binding site for N-acetylneuraminate. 3 consecutive Ig-like C2-type domains span residues 159-244 (PDVY…RTVR), 251-350 (PKDL…LDLS), and 355-452 (PENL…LSLS). Asparagine 262 is a glycosylation site (N-linked (GlcNAc...) asparagine). The cysteines at positions 287 and 334 are disulfide-linked. N-linked (GlcNAc...) asparagine glycans are attached at residues asparagine 366 and asparagine 375. A disulfide bond links cysteine 391 and cysteine 436. Residues asparagine 497 and asparagine 515 are each glycosylated (N-linked (GlcNAc...) asparagine). The helical transmembrane segment at 562 to 584 (GAALGAGVAALLAFCSCLVVFRV) threads the bilayer. The Cytoplasmic segment spans residues 585-698 (KICRKEARKR…EREMSGMVPK (114 aa)). The disordered stretch occupies residues 596-635 (AAEQDVPSTLGPISQGHQHECSAGSSQDHPPPGAATYTPG). The short motif at 642–647 (LHYASL) is the ITIM motif element. At tyrosine 668 the chain carries Phosphotyrosine. Residues 675–698 (TGQPLRGPGFGLQLEREMSGMVPK) form a disordered region.

The protein belongs to the immunoglobulin superfamily. SIGLEC (sialic acid binding Ig-like lectin) family. As to quaternary structure, interacts with PTPN6/SHP-1 and PTPN11/SHP-2 upon phosphorylation. Post-translationally, phosphorylated on tyrosine residues. Expressed by macrophages in various tissues including Kupffer cells. Also found in brain microglia.

It is found in the membrane. In terms of biological role, putative adhesion molecule that mediates sialic-acid dependent binding to cells. Preferentially binds to alpha-2,8-linked sialic acid. The sialic acid recognition site may be masked by cis interactions with sialic acids on the same cell surface. In the immune response, may act as an inhibitory receptor upon ligand induced tyrosine phosphorylation by recruiting cytoplasmic phosphatase(s) via their SH2 domain(s) that block signal transduction through dephosphorylation of signaling molecules. The protein is Sialic acid-binding Ig-like lectin 11 (SIGLEC11) of Homo sapiens (Human).